The sequence spans 329 residues: MYG1 protein (329 aa).

This sequence belongs to the MYG1 family.

This is MYG1 protein from Dictyostelium discoideum (Social amoeba).